Here is a 25-residue protein sequence, read N- to C-terminus: Antimicrobial peptide 3 (25 aa).

Skin.

It is found in the secreted. In terms of biological role, has antibacterial activity against Gram-positive bacterium S.aureus and Gram-negative bacterium E.coli, when in combination with XT1 and XT6. The polypeptide is Antimicrobial peptide 3 (Xenopus tropicalis (Western clawed frog)).